Reading from the N-terminus, the 1106-residue chain is Voltage-dependent calcium channel subunit alpha-2/delta-1 (1106 aa).

Residues 1-26 form the signal peptide; it reads MAAGRPLAWTLTLWQAWLILIGPSSE. At 27–1076 the chain is on the extracellular side; that stretch reads EPFPSAVTIK…VLEDYTDCGG (1050 aa). Asn94 is a glycosylation site (N-linked (GlcNAc...) asparagine). Ser121 carries the phosphoserine modification. N-linked (GlcNAc...) asparagine glycosylation is found at Asn138 and Asn186. The 178-residue stretch at 255 to 432 folds into the VWFA domain; sequence DMLILVDVSG…INTQEYLDVL (178 aa). Positions 261, 263, and 265 each coordinate a divalent metal cation. Positions 261-265 match the MIDAS-like motif motif; the sequence is DVSGS. Asn326 and Asn350 each carry an N-linked (GlcNAc...) asparagine glycan. A disulfide bond links Cys406 and Cys1062. A Cache domain is found at 448–539; the sequence is WTNVYLDALE…QPKPIGVGIP (92 aa). N-linked (GlcNAc...) asparagine glycosylation is found at Asn615, Asn784, and Asn891. A helical membrane pass occupies residues 1077–1097; the sequence is VSGLNPSLWSIIGIQFVLLWL. Residues 1098–1106 lie on the Cytoplasmic side of the membrane; the sequence is VSGSRHCLL.

Belongs to the calcium channel subunit alpha-2/delta family. In terms of assembly, dimer formed of alpha-2-1 and delta-1 chains; disulfide-linked. Voltage-dependent calcium channels are multisubunit complexes, consisting of alpha-1 (CACNA1), alpha-2 (CACNA2D), beta (CACNB) and delta (CACNA2D) subunits in a 1:1:1:1 ratio. Post-translationally, proteolytically processed into subunits alpha-2-1 and delta-1 that are disulfide-linked. As to expression, skeletal muscle.

The protein localises to the membrane. The protein resides in the cell membrane. Functionally, the alpha-2/delta subunit of voltage-dependent calcium channels regulates calcium current density and activation/inactivation kinetics of the calcium channel. Plays an important role in excitation-contraction coupling. In Oryctolagus cuniculus (Rabbit), this protein is Voltage-dependent calcium channel subunit alpha-2/delta-1 (CACNA2D1).